Consider the following 41-residue polypeptide: Disintegrin viperistatin (41 aa).

Disulfide bonds link C1–C10, C6–C29, C7–C34, and C19–C36. In terms of domain architecture, Disintegrin spans 1 to 41 (CTTGPCCRQCKLKPAGTTCWKTSRTSHYCTGKSCDCPVYQG). The Cell attachment site; atypical (KTS) motif lies at 21-23 (KTS).

Monomer. As to expression, expressed by the venom gland.

Its subcellular location is the secreted. In terms of biological role, potent and highly selective inhibitor of alpha-1/beta-1 (ITGA1/ITGB1) integrin binding to collagen I and IV. Is about 25-fold more potent than obtustatin inhibiting the binding of this integrin to collagen IV. The chain is Disintegrin viperistatin from Daboia palaestinae (Palestine viper).